Consider the following 336-residue polypeptide: Protein YIPF3 (336 aa).

The disordered stretch occupies residues M1 to E73. Topologically, residues M1 to K143 are cytoplasmic. The segment covering E55–E73 has biased composition (acidic residues). A helical transmembrane segment spans residues I144–H164. The Lumenal portion of the chain corresponds to G165–A182. Residues I183–L203 form a helical membrane-spanning segment. Over C204–T209 the chain is Cytoplasmic. Residues M210–V230 form a helical membrane-spanning segment. The Lumenal portion of the chain corresponds to T231–L239. A helical membrane pass occupies residues F240–V260. Topologically, residues S261–R269 are cytoplasmic. A helical transmembrane segment spans residues L270–A290. The Lumenal segment spans residues Y291–L336. Residue N326 is glycosylated (N-linked (GlcNAc...) asparagine).

The protein belongs to the YIP1 family.

The protein localises to the cell membrane. It is found in the golgi apparatus. It localises to the cis-Golgi network membrane. The protein resides in the cytoplasm. Functionally, involved in the maintenance of the Golgi structure. May play a role in hematopoiesis. This Gallus gallus (Chicken) protein is Protein YIPF3 (YIPF3).